The chain runs to 278 residues: Polyamine aminopropyltransferase (278 aa).

One can recognise a PABS domain in the interval 3–240 (EGWFTEAVED…GWWSATLMVN (238 aa)). Gln33 provides a ligand contact to S-methyl-5'-thioadenosine. The spermidine site is built by His64 and Asp88. S-methyl-5'-thioadenosine is bound by residues Glu108 and 139–140 (DG). Catalysis depends on Asp158, which acts as the Proton acceptor. 158–161 (DSTD) contacts spermidine. Pro165 provides a ligand contact to S-methyl-5'-thioadenosine.

It belongs to the spermidine/spermine synthase family. As to quaternary structure, homodimer or homotetramer.

Its subcellular location is the cytoplasm. The catalysed reaction is S-adenosyl 3-(methylsulfanyl)propylamine + putrescine = S-methyl-5'-thioadenosine + spermidine + H(+). The protein operates within amine and polyamine biosynthesis; spermidine biosynthesis; spermidine from putrescine: step 1/1. Its function is as follows. Catalyzes the irreversible transfer of a propylamine group from the amino donor S-adenosylmethioninamine (decarboxy-AdoMet) to putrescine (1,4-diaminobutane) to yield spermidine. The chain is Polyamine aminopropyltransferase from Halorhodospira halophila (strain DSM 244 / SL1) (Ectothiorhodospira halophila (strain DSM 244 / SL1)).